A 319-amino-acid polypeptide reads, in one-letter code: Ornithine carbamoyltransferase (319 aa).

Carbamoyl phosphate-binding positions include 57-60 (STRT), glutamine 84, arginine 108, and 135-138 (HPCQ). Residues asparagine 166, aspartate 230, and 234–235 (SM) contribute to the L-ornithine site. Carbamoyl phosphate is bound by residues 270 to 271 (CL) and arginine 298.

It belongs to the aspartate/ornithine carbamoyltransferase superfamily. OTCase family.

Its subcellular location is the cytoplasm. It carries out the reaction carbamoyl phosphate + L-ornithine = L-citrulline + phosphate + H(+). It participates in amino-acid biosynthesis; L-arginine biosynthesis; L-arginine from L-ornithine and carbamoyl phosphate: step 1/3. Reversibly catalyzes the transfer of the carbamoyl group from carbamoyl phosphate (CP) to the N(epsilon) atom of ornithine (ORN) to produce L-citrulline. In Bacillus subtilis (strain 168), this protein is Ornithine carbamoyltransferase (argF).